The sequence spans 98 residues: NADH-ubiquinone oxidoreductase chain 4L (98 aa).

Transmembrane regions (helical) follow at residues 2 to 22 (PPIF…TLIF), 29 to 49 (SLLC…LIIL), and 61 to 81 (ILLL…LVMV).

Belongs to the complex I subunit 4L family. In terms of assembly, core subunit of respiratory chain NADH dehydrogenase (Complex I) which is composed of 45 different subunits.

It localises to the mitochondrion inner membrane. It catalyses the reaction a ubiquinone + NADH + 5 H(+)(in) = a ubiquinol + NAD(+) + 4 H(+)(out). In terms of biological role, core subunit of the mitochondrial membrane respiratory chain NADH dehydrogenase (Complex I) which catalyzes electron transfer from NADH through the respiratory chain, using ubiquinone as an electron acceptor. Part of the enzyme membrane arm which is embedded in the lipid bilayer and involved in proton translocation. This is NADH-ubiquinone oxidoreductase chain 4L (MT-ND4L) from Avahi occidentalis (Western woolly lemur).